The following is a 360-amino-acid chain: NAD(P)H-quinone oxidoreductase subunit 1, chloroplastic (360 aa).

8 helical membrane-spanning segments follow: residues 27 to 47 (VWIF…VLVI), 98 to 118 (FSIG…VIPF), 129 to 149 (IGIF…LMSG), 165 to 185 (AAQS…ISLL), 203 to 223 (FWGW…ISSL), 253 to 273 (FGLF…FVTI), 297 to 317 (VFGT…VLVI), and 340 to 360 (FLLP…LLSL).

It belongs to the complex I subunit 1 family. As to quaternary structure, NDH is composed of at least 16 different subunits, 5 of which are encoded in the nucleus.

The protein resides in the plastid. It is found in the chloroplast thylakoid membrane. It catalyses the reaction a plastoquinone + NADH + (n+1) H(+)(in) = a plastoquinol + NAD(+) + n H(+)(out). The catalysed reaction is a plastoquinone + NADPH + (n+1) H(+)(in) = a plastoquinol + NADP(+) + n H(+)(out). Functionally, NDH shuttles electrons from NAD(P)H:plastoquinone, via FMN and iron-sulfur (Fe-S) centers, to quinones in the photosynthetic chain and possibly in a chloroplast respiratory chain. The immediate electron acceptor for the enzyme in this species is believed to be plastoquinone. Couples the redox reaction to proton translocation, and thus conserves the redox energy in a proton gradient. This Draba nemorosa (Woodland whitlowgrass) protein is NAD(P)H-quinone oxidoreductase subunit 1, chloroplastic.